A 2211-amino-acid chain; its full sequence is Orsellinic acid synthase (2211 aa).

The segment at threonine 44–histidine 246 is N-terminal acylcarrier protein transacylase domain (SAT). One can recognise a Ketosynthase family 3 (KS3) domain in the interval tryptophan 380 to glutamate 805. Active-site for beta-ketoacyl synthase activity residues include cysteine 549, histidine 684, and histidine 724. Residues valine 910–proline 1228 form a malonyl-CoA:ACP transacylase (MAT) domain region. The active-site For acyl/malonyl transferase activity is the serine 1006. An N-terminal hotdog fold region spans residues histidine 1309–serine 1440. Residues histidine 1309–glutamate 1629 enclose the PKS/mFAS DH domain. The product template (PT) domain stretch occupies residues glutamate 1334–valine 1573. Catalysis depends on histidine 1339, which acts as the Proton acceptor; for dehydratase activity. Residues valine 1473–glutamate 1629 are C-terminal hotdog fold. The active-site Proton donor; for dehydratase activity is aspartate 1537. Carrier domains are found at residues alanine 1681–serine 1755 and serine 1787–proline 1865. At serine 1715 the chain carries O-(pantetheine 4'-phosphoryl)serine. The tract at residues serine 1755–valine 1786 is disordered. Serine 1824 bears the O-(pantetheine 4'-phosphoryl)serine mark. The tract at residues serine 1937 to alanine 2204 is thioesterase (TE) domain.

It catalyses the reaction 3 malonyl-CoA + acetyl-CoA + 2 H(+) = orsellinate + 3 CO2 + 4 CoA. The protein operates within secondary metabolite biosynthesis. Functionally, non-reducing polyketide synthase; part of the gene cluster that mediates the biosynthesis of the bibenzoquinone oosporein, a metabolite required for fungal virulence that acts by evading host immunity to facilitate fungal multiplication in insects. The non-reducing polyketide synthase OpS1 produces orsellinic acid by condensing acetyl-CoA with 3 malonyl-CoA units. Orsellinic acid is then hydroxylated to benzenetriol by the hydroxylase OpS4. The intermediate is oxidized either nonenzymatically to 5,5'-dideoxy-oosporein or enzymatically to benzenetetrol by the oxidoreductase OpS7. The latter is further dimerized to oosporein by the catalase OpS5. OpS6 probably functions en route for protecting cells against oxidative stress by scavenging any leaked free radical form of benzenetetrol by activating the thiol group of glutathione. The polypeptide is Orsellinic acid synthase (Beauveria bassiana (strain ARSEF 2860) (White muscardine disease fungus)).